The following is a 477-amino-acid chain: MSVLLVGVSHRSAPVSVLEKVAITDADRPKLIDKMLASSHISEAMIVSTCNRVEVYAVVDAFHGGLAEVGELLTRHSGLAMPDLTKHAYVRYSEAAAEHLFAVASGLDSMVVGEQQVLSQIRGAYATADAQQAVGRTLHELAQHALRVGKRVHSETGIDRAGASVVSVALDRAAQVLGDLAGRTAVVVGAGAMGGLSVAHLARAGIGRIIVVNRTIERARRLAETAASYGVESSALELDRLHEAMSAADVVLSCTGAVGAVVTLADTHRALADRDRAEFPAGDRPLVFCDLGLPRDVEPAVAGLPGVAVIDIESLQRDPAAGAAADDTAAARSIVAEELAKYLAGQRMAEVTPTVAALRQRAAEVVEAELLRLDSRLPGLAEPERDEVARTVRRVVDKLLHAPTVRVKQLASTPGGDSYAEALRELFELKPGAAQAVAAPMEITAIGPDRTAGLADDFTPGHRLDFEQHLGEEGKPA.

Residues 49-52, S109, 114-116, and Q120 each bind substrate; these read TCNR and EQQ. Catalysis depends on C50, which acts as the Nucleophile. 189 to 194 lines the NADP(+) pocket; sequence GAGAMG.

The protein belongs to the glutamyl-tRNA reductase family. In terms of assembly, homodimer.

The enzyme catalyses (S)-4-amino-5-oxopentanoate + tRNA(Glu) + NADP(+) = L-glutamyl-tRNA(Glu) + NADPH + H(+). Its pathway is porphyrin-containing compound metabolism; protoporphyrin-IX biosynthesis; 5-aminolevulinate from L-glutamyl-tRNA(Glu): step 1/2. Functionally, catalyzes the NADPH-dependent reduction of glutamyl-tRNA(Glu) to glutamate 1-semialdehyde (GSA). The protein is Glutamyl-tRNA reductase of Nocardia farcinica (strain IFM 10152).